The primary structure comprises 286 residues: Ribosomal RNA small subunit methyltransferase H (286 aa).

S-adenosyl-L-methionine-binding positions include 17–19 (AGH), Asp36, Phe63, Asp84, and Gln91.

It belongs to the methyltransferase superfamily. RsmH family.

Its subcellular location is the cytoplasm. It catalyses the reaction cytidine(1402) in 16S rRNA + S-adenosyl-L-methionine = N(4)-methylcytidine(1402) in 16S rRNA + S-adenosyl-L-homocysteine + H(+). Specifically methylates the N4 position of cytidine in position 1402 (C1402) of 16S rRNA. This chain is Ribosomal RNA small subunit methyltransferase H, found in Metamycoplasma arthritidis (strain 158L3-1) (Mycoplasma arthritidis).